The chain runs to 335 residues: Aspartate carbamoyltransferase catalytic subunit (335 aa).

Carbamoyl phosphate-binding residues include Arg-81 and Thr-82. Lys-109 provides a ligand contact to L-aspartate. The carbamoyl phosphate site is built by Arg-131, His-159, and Gln-162. Residues Arg-192 and Arg-246 each contribute to the L-aspartate site. The carbamoyl phosphate site is built by Gly-287 and Pro-288.

Belongs to the aspartate/ornithine carbamoyltransferase superfamily. ATCase family. As to quaternary structure, heterododecamer (2C3:3R2) of six catalytic PyrB chains organized as two trimers (C3), and six regulatory PyrI chains organized as three dimers (R2).

The enzyme catalyses carbamoyl phosphate + L-aspartate = N-carbamoyl-L-aspartate + phosphate + H(+). It participates in pyrimidine metabolism; UMP biosynthesis via de novo pathway; (S)-dihydroorotate from bicarbonate: step 2/3. Its function is as follows. Catalyzes the condensation of carbamoyl phosphate and aspartate to form carbamoyl aspartate and inorganic phosphate, the committed step in the de novo pyrimidine nucleotide biosynthesis pathway. This Caulobacter sp. (strain K31) protein is Aspartate carbamoyltransferase catalytic subunit.